We begin with the raw amino-acid sequence, 143 residues long: Large ribosomal subunit protein uL11 (143 aa).

Belongs to the universal ribosomal protein uL11 family. As to quaternary structure, part of the ribosomal stalk of the 50S ribosomal subunit. Interacts with L10 and the large rRNA to form the base of the stalk. L10 forms an elongated spine to which L12 dimers bind in a sequential fashion forming a multimeric L10(L12)X complex. In terms of processing, one or more lysine residues are methylated.

Its function is as follows. Forms part of the ribosomal stalk which helps the ribosome interact with GTP-bound translation factors. The sequence is that of Large ribosomal subunit protein uL11 from Cupriavidus metallidurans (strain ATCC 43123 / DSM 2839 / NBRC 102507 / CH34) (Ralstonia metallidurans).